A 306-amino-acid chain; its full sequence is Aspartate carbamoyltransferase catalytic subunit (306 aa).

Arg-55 and Thr-56 together coordinate carbamoyl phosphate. Position 84 (Lys-84) interacts with L-aspartate. Positions 105, 133, and 136 each coordinate carbamoyl phosphate. L-aspartate contacts are provided by Arg-166 and Arg-227. Leu-265 and Pro-266 together coordinate carbamoyl phosphate.

It belongs to the aspartate/ornithine carbamoyltransferase superfamily. ATCase family. Heterododecamer (2C3:3R2) of six catalytic PyrB chains organized as two trimers (C3), and six regulatory PyrI chains organized as three dimers (R2).

The enzyme catalyses carbamoyl phosphate + L-aspartate = N-carbamoyl-L-aspartate + phosphate + H(+). The protein operates within pyrimidine metabolism; UMP biosynthesis via de novo pathway; (S)-dihydroorotate from bicarbonate: step 2/3. Catalyzes the condensation of carbamoyl phosphate and aspartate to form carbamoyl aspartate and inorganic phosphate, the committed step in the de novo pyrimidine nucleotide biosynthesis pathway. This is Aspartate carbamoyltransferase catalytic subunit from Aeromonas salmonicida (strain A449).